Here is a 979-residue protein sequence, read N- to C-terminus: Mast/stem cell growth factor receptor Kit (979 aa).

Positions 1 to 27 (MRGARGAWDFLCVLLLLLLLGVQTGSS) are cleaved as a signal peptide. The Extracellular segment spans residues 28 to 527 (QPSVSPGEPS…QIHPHTLFTP (500 aa)). Ig-like C2-type domains are found at residues 29–114 (PSVS…VFVR), 123–207 (DLPL…LKVR), 214–311 (PVVS…LEVV), 320–413 (PMMS…VYVN), and 416–510 (PEIL…FNFA). The cysteines at positions 60 and 99 are disulfide-linked. N-linked (GlcNAc...) asparagine glycosylation is found at asparagine 96, asparagine 132, and asparagine 147. 3 disulfides stabilise this stretch: cysteine 138–cysteine 188, cysteine 153–cysteine 185, and cysteine 235–cysteine 293. N-linked (GlcNAc...) asparagine glycosylation is found at asparagine 286, asparagine 296, asparagine 303, asparagine 355, asparagine 370, asparagine 403, asparagine 466, and asparagine 489. Cysteine 431 and cysteine 494 are joined by a disulfide. A helical transmembrane segment spans residues 528 to 548 (LLIGFVIAAGMMCIIVMILTY). Over 549–979 (KYLQKPMYEV…TQPLLVHEDV (431 aa)) the chain is Cytoplasmic. Residues tyrosine 550, tyrosine 556, tyrosine 571, and tyrosine 573 each carry the phosphotyrosine; by autocatalysis modification. A Mg(2+)-binding site is contributed by tyrosine 571. An important for interaction with phosphotyrosine-binding proteins region spans residues 571–573 (YVY). Residues 592-940 (LSFGKTLGAG…ISDSTNHIYS (349 aa)) form the Protein kinase domain. ATP-binding positions include 599–606 (GAGAFGKV), lysine 626, and 674–680 (EYCCYGD). 3 positions are modified to phosphotyrosine; by autocatalysis: tyrosine 706, tyrosine 724, and tyrosine 733. Residues serine 744 and serine 749 each carry the phosphoserine; by PKC/PRKCA modification. Aspartate 795 acts as the Proton acceptor in catalysis. Residue arginine 799 participates in ATP binding. Mg(2+)-binding residues include asparagine 800 and aspartate 813. The residue at position 824 (serine 824) is a Phosphoserine. Tyrosine 826 bears the Phosphotyrosine; by autocatalysis mark. Serine 894 bears the Phosphoserine mark. Tyrosine 903 and tyrosine 939 each carry phosphotyrosine; by autocatalysis. Serine 962 carries the phosphoserine modification.

This sequence belongs to the protein kinase superfamily. Tyr protein kinase family. CSF-1/PDGF receptor subfamily. Monomer in the absence of bound KITLG/SCF. Homodimer in the presence of bound KITLG/SCF, forming a heterotetramer with two KITLG/SCF molecules. Interacts (via phosphorylated tyrosine residues) with the adapter proteins GRB2 and GRB7 (via SH2 domain), and SH2B2/APS. Interacts (via C-terminus) with MPDZ (via the tenth PDZ domain). Interacts (via phosphorylated tyrosine residues) with PIK3R1 and PIK3 catalytic subunit. Interacts (via phosphorylated tyrosine) with CRK (isoform Crk-II), FYN, SHC1 and MATK/CHK (via SH2 domain). Interacts with LYN and FES/FPS. Interacts (via phosphorylated tyrosine residues) with the protein phosphatases PTPN6/SHP-1 (via SH2 domain), PTPN11/SHP-2 (via SH2 domain) and PTPRU. Interacts with PLCG1. Interacts with DOK1 and TEC. Interacts with IL1RAP (independent of stimulation with KITLG/SCF). A mast cell-specific KITLG/SCF-induced interleukin-33 signaling complex contains IL1RL1, IL1RAP, KIT and MYD88. Post-translationally, ubiquitinated by SOCS6. KIT is rapidly ubiquitinated after autophosphorylation induced by KITLG/SCF binding, leading to internalization and degradation. Autophosphorylated on tyrosine residues. KITLG/SCF binding promotes autophosphorylation. Phosphorylated tyrosine residues are important for interaction with specific binding partners.

The protein resides in the cell membrane. It catalyses the reaction L-tyrosyl-[protein] + ATP = O-phospho-L-tyrosyl-[protein] + ADP + H(+). Present in an inactive conformation in the absence of bound ligand. KITLG/SCF binding leads to dimerization and activation by autophosphorylation on tyrosine residues. Activity is down-regulated by PRKCA-mediated phosphorylation on serine residues. Functionally, tyrosine-protein kinase that acts as a cell-surface receptor for the cytokine KITLG/SCF and plays an essential role in the regulation of cell survival and proliferation, hematopoiesis, stem cell maintenance, gametogenesis, mast cell development, migration and function, and in melanogenesis. In response to KITLG/SCF binding, KIT can activate several signaling pathways. Phosphorylates PIK3R1, PLCG1, SH2B2/APS and CBL. Activates the AKT1 signaling pathway by phosphorylation of PIK3R1, the regulatory subunit of phosphatidylinositol 3-kinase. Activated KIT also transmits signals via GRB2 and activation of RAS, RAF1 and the MAP kinases MAPK1/ERK2 and/or MAPK3/ERK1. Promotes activation of STAT family members STAT1, STAT3, STAT5A and STAT5B. Activation of PLCG1 leads to the production of the cellular signaling molecules diacylglycerol and inositol 1,4,5-trisphosphate. KIT signaling is modulated by protein phosphatases, and by rapid internalization and degradation of the receptor. Activated KIT promotes phosphorylation of the protein phosphatases PTPN6/SHP-1 and PTPRU, and of the transcription factors STAT1, STAT3, STAT5A and STAT5B. Promotes phosphorylation of PIK3R1, CBL, CRK (isoform Crk-II), LYN, MAPK1/ERK2 and/or MAPK3/ERK1, PLCG1, SRC and SHC1. The chain is Mast/stem cell growth factor receptor Kit (KIT) from Canis lupus familiaris (Dog).